Consider the following 396-residue polypeptide: Na(+)/H(+) antiporter NhaA 2 (396 aa).

The next 11 helical transmembrane spans lie at 17–37 (LSGL…NSDF), 62–82 (LLHW…GLEI), 98–118 (SFPI…YISL), 125–145 (GFGV…MLLG), 154–174 (LFLV…VAIF), 179–199 (LHFE…FLNY), 209–229 (IILG…STIA), 268–288 (FSAF…IIDF), 296–316 (LIVL…IFSF), 337–357 (IFAV…ISHL), and 368–388 (VKLG…VLLI).

It belongs to the NhaA Na(+)/H(+) (TC 2.A.33) antiporter family.

It is found in the cell inner membrane. The enzyme catalyses Na(+)(in) + 2 H(+)(out) = Na(+)(out) + 2 H(+)(in). Na(+)/H(+) antiporter that extrudes sodium in exchange for external protons. This chain is Na(+)/H(+) antiporter NhaA 2, found in Aliarcobacter butzleri (strain RM4018) (Arcobacter butzleri).